The sequence spans 95 residues: Probable dolichol-phosphate mannosyltransferase subunit 3 (95 aa).

2 helical membrane passes run 10–30 (AHVILFVLVWLLAYTDVVPVL) and 44–64 (APFFAVLFLGIYAVFNVVYGV).

It belongs to the DPM3 family.

The protein localises to the endoplasmic reticulum membrane. It functions in the pathway protein modification; protein glycosylation. Stabilizer subunit of the dolichol-phosphate-mannose synthase complex. The chain is Probable dolichol-phosphate mannosyltransferase subunit 3 (dpm-3) from Caenorhabditis elegans.